The chain runs to 400 residues: Acetylornithine aminotransferase (400 aa).

Residues 102–103 and F135 each bind pyridoxal 5'-phosphate; that span reads GA. R138 contributes to the N(2)-acetyl-L-ornithine binding site. 220 to 223 lines the pyridoxal 5'-phosphate pocket; that stretch reads DEVQ. K249 carries the N6-(pyridoxal phosphate)lysine modification. S276 contacts N(2)-acetyl-L-ornithine. T277 provides a ligand contact to pyridoxal 5'-phosphate.

Belongs to the class-III pyridoxal-phosphate-dependent aminotransferase family. ArgD subfamily. In terms of assembly, homodimer. Pyridoxal 5'-phosphate is required as a cofactor.

Its subcellular location is the cytoplasm. The catalysed reaction is N(2)-acetyl-L-ornithine + 2-oxoglutarate = N-acetyl-L-glutamate 5-semialdehyde + L-glutamate. The protein operates within amino-acid biosynthesis; L-arginine biosynthesis; N(2)-acetyl-L-ornithine from L-glutamate: step 4/4. This chain is Acetylornithine aminotransferase, found in Gloeobacter violaceus (strain ATCC 29082 / PCC 7421).